A 294-amino-acid polypeptide reads, in one-letter code: Phosphatidylserine decarboxylase proenzyme (294 aa).

Catalysis depends on charge relay system; for autoendoproteolytic cleavage activity residues Asp113, His169, and Ser256. Ser256 functions as the Schiff-base intermediate with substrate; via pyruvic acid; for decarboxylase activity in the catalytic mechanism. Position 256 is a pyruvic acid (Ser); by autocatalysis (Ser256).

Belongs to the phosphatidylserine decarboxylase family. PSD-B subfamily. Prokaryotic type II sub-subfamily. In terms of assembly, heterodimer of a large membrane-associated beta subunit and a small pyruvoyl-containing alpha subunit. It depends on pyruvate as a cofactor. In terms of processing, is synthesized initially as an inactive proenzyme. Formation of the active enzyme involves a self-maturation process in which the active site pyruvoyl group is generated from an internal serine residue via an autocatalytic post-translational modification. Two non-identical subunits are generated from the proenzyme in this reaction, and the pyruvate is formed at the N-terminus of the alpha chain, which is derived from the carboxyl end of the proenzyme. The autoendoproteolytic cleavage occurs by a canonical serine protease mechanism, in which the side chain hydroxyl group of the serine supplies its oxygen atom to form the C-terminus of the beta chain, while the remainder of the serine residue undergoes an oxidative deamination to produce ammonia and the pyruvoyl prosthetic group on the alpha chain. During this reaction, the Ser that is part of the protease active site of the proenzyme becomes the pyruvoyl prosthetic group, which constitutes an essential element of the active site of the mature decarboxylase.

It is found in the cell membrane. The enzyme catalyses a 1,2-diacyl-sn-glycero-3-phospho-L-serine + H(+) = a 1,2-diacyl-sn-glycero-3-phosphoethanolamine + CO2. The protein operates within phospholipid metabolism; phosphatidylethanolamine biosynthesis; phosphatidylethanolamine from CDP-diacylglycerol: step 2/2. Functionally, catalyzes the formation of phosphatidylethanolamine (PtdEtn) from phosphatidylserine (PtdSer). The polypeptide is Phosphatidylserine decarboxylase proenzyme (Clostridium perfringens (strain ATCC 13124 / DSM 756 / JCM 1290 / NCIMB 6125 / NCTC 8237 / Type A)).